A 107-amino-acid polypeptide reads, in one-letter code: Ribonuclease P protein component 4 (107 aa).

Positions 62, 65, 87, and 90 each coordinate Zn(2+).

It belongs to the eukaryotic/archaeal RNase P protein component 4 family. As to quaternary structure, consists of a catalytic RNA component and at least 4-5 protein subunits. The cofactor is Zn(2+).

Its subcellular location is the cytoplasm. The enzyme catalyses Endonucleolytic cleavage of RNA, removing 5'-extranucleotides from tRNA precursor.. In terms of biological role, part of ribonuclease P, a protein complex that generates mature tRNA molecules by cleaving their 5'-ends. The sequence is that of Ribonuclease P protein component 4 from Archaeoglobus fulgidus (strain ATCC 49558 / DSM 4304 / JCM 9628 / NBRC 100126 / VC-16).